Reading from the N-terminus, the 383-residue chain is Deoxyhypusine synthase-like protein (383 aa).

The protein belongs to the deoxyhypusine synthase family.

The polypeptide is Deoxyhypusine synthase-like protein (Nostoc sp. (strain PCC 7120 / SAG 25.82 / UTEX 2576)).